A 179-amino-acid chain; its full sequence is UPF0167 protein PA1536 (179 aa).

This sequence belongs to the UPF0167 family.

The polypeptide is UPF0167 protein PA1536 (Pseudomonas aeruginosa (strain ATCC 15692 / DSM 22644 / CIP 104116 / JCM 14847 / LMG 12228 / 1C / PRS 101 / PAO1)).